Reading from the N-terminus, the 37-residue chain is Cytochrome b6-f complex subunit 5 (37 aa).

A helical membrane pass occupies residues 5–25 (LLSGIVLGLVPVTIAGLFVTA).

This sequence belongs to the PetG family. The 4 large subunits of the cytochrome b6-f complex are cytochrome b6, subunit IV (17 kDa polypeptide, PetD), cytochrome f and the Rieske protein, while the 4 small subunits are PetG, PetL, PetM and PetN. The complex functions as a dimer.

Its subcellular location is the plastid. The protein localises to the chloroplast thylakoid membrane. Functionally, component of the cytochrome b6-f complex, which mediates electron transfer between photosystem II (PSII) and photosystem I (PSI), cyclic electron flow around PSI, and state transitions. PetG is required for either the stability or assembly of the cytochrome b6-f complex. The protein is Cytochrome b6-f complex subunit 5 of Stigeoclonium helveticum (Green alga).